A 588-amino-acid chain; its full sequence is Disabled homolog 1 (588 aa).

Positions 1–26 are disordered; it reads MSTETELQVAVKTSAKKDSRKKGQDR. Positions 15–26 are enriched in basic and acidic residues; that stretch reads AKKDSRKKGQDR. One can recognise a PID domain in the interval 36–189; it reads KGEGVRYKAK…CEQAVYQTIL (154 aa). Phosphotyrosine occurs at positions 198, 220, and 232. Disordered regions lie at residues 417–443, 451–470, and 502–588; these read LTPL…RQKM, FQMA…PSLT, and LTPV…QAGS. Residues 424-436 show a composition bias toward polar residues; it reads PGTSDSTRSSPQT. Composition is skewed to low complexity over residues 503–512 and 520–534; these read TPVTSTTPST and PRQS…SHAS. Residue Ser524 is modified to Phosphoserine; by CDK5. Acidic residues predominate over residues 537 to 546; it reads TTDDIFEEGF.

In terms of assembly, associates with the SH2 domains of SRC, FYN and ABL. Interacts (phosphorylated on tyrosine residues) with CRK and CRKL (via respective SH2 domain). Interacts with SIAH1, LRP8 and VLDLR. Interacts with LRP1. Interacts with APLP1 (via NPXY motif). Interacts with DAB2IP. Interacts with ZSWIM8. Phosphorylated by FYN on Tyr-198 and Tyr-220 upon reelin induction in embryonic neurons. Also phosphorylated on Ser-524 independently of reelin signaling. In terms of processing, ubiquitinated by various cullin-5-RING E3 ubiquitin-protein ligase complexes (ECS complexes) following ligand-binding and phosphorylation, leading to its degradation. Ubiquitinated by the ECS(SOCS7) complex in the cortical plate of the developing cerebral cortex following ligand-binding and phosphorylation by FYN, leading to its degradation by the proteasome. Recognized by ZSWIM8 through a disorder targets misorder mechanism that eliminates misfolded DAB1 via ubiquitination and proteasomal degradation. In terms of tissue distribution, mainly expressed in brain.

The protein resides in the cytoplasm. In terms of biological role, signaling adapter of the reelin-mediated signaling pathway, which regulates the migration and differentiation of postmitotic neurons during brain development. Mediates intracellular transduction of Reelin signaling following reelin (RELN)-binding to its receptor: acts by docking proteins through its phosphotyrosine residues and PID domain. This Homo sapiens (Human) protein is Disabled homolog 1 (DAB1).